The sequence spans 106 residues: uncharacterized protein (106 aa).

The N-terminal stretch at 1 to 25 is a signal peptide; the sequence is MSVIKKNIPAIGLCICAFFIHSAVG.

To the N-terminal of the FimA/PapA family of fimbria proteins.

This is an uncharacterized protein from Salmonella typhi.